The chain runs to 516 residues: Effector protein hopAB1 (516 aa).

Disordered stretches follow at residues 1 to 93 (MSGI…AQPA) and 175 to 259 (RALA…DEAL). The span at 16-30 (WRADDEPVTERERDS) shows a compositional bias: basic and acidic residues. Residues 31–41 (SSGANLTNSPQ) show a composition bias toward polar residues. Residues 81-90 (PVEPRQPPEA) show a composition bias toward pro residues. Low complexity-rich tracts occupy residues 183 to 196 (PAPS…SRSS) and 212 to 224 (QTSS…SSTS).

This sequence belongs to the HopAB family.

It localises to the secreted. Functionally, effector protein that plays different roles depending on the species and plant cultivars that interact with the pathogen. Acts as a virulence determinant by enhancing the development of disease symptoms and bacterial growth. Acts as an avirulence factor by eliciting hypersensitive response (HR) and plant resistance. This is Effector protein hopAB1 (hopAB1) from Pseudomonas syringae pv. syringae (strain B728a).